The following is a 255-amino-acid chain: Small ribosomal subunit protein uS2 (255 aa).

This sequence belongs to the universal ribosomal protein uS2 family.

This chain is Small ribosomal subunit protein uS2, found in Geotalea daltonii (strain DSM 22248 / JCM 15807 / FRC-32) (Geobacter daltonii).